Here is a 92-residue protein sequence, read N- to C-terminus: Small ribosomal subunit protein uS19c (92 aa).

It belongs to the universal ribosomal protein uS19 family.

It is found in the plastid. Functionally, protein S19 forms a complex with S13 that binds strongly to the 16S ribosomal RNA. The sequence is that of Small ribosomal subunit protein uS19c from Cuscuta exaltata (Tall dodder).